Here is a 378-residue protein sequence, read N- to C-terminus: MGISLSKRRRDNNNNHHHPHHNPPYYYSDPPPQQPPPQNGYSYSHNYPVSTPQLSLPPPPAQPPSSSQPPPSQISYRPYGQNYHQNQYYPQQAPPYFTGYHHNGFNPMMRPVYFGPTPVAVMEPPAPYVEHQTAKKVKNDVNVNKATVRLVADDLNPGHYLVSFVFDALFDGSFTIIFFGEEESKCTIVPHLPEAFPPIKVPFQKGAGQKFLQAPGTGIDLGFFSLDDLSKPSPEEVYPLVISAETVISPSSVSEEPLVHKQITQAVLEKTNDGSFKVKVMKQILWIEGERYELQELYGIDNSITQGTAASGLEDTGGKECVICLTEPKDTAVMPCRHLCLCSDCAEELRFQTNKCPICRQPIHELVKIKVESSDEQH.

The segment covering 1–21 (MGISLSKRRRDNNNNHHHPHH) has biased composition (basic residues). A disordered region spans residues 1-79 (MGISLSKRRR…PPSQISYRPY (79 aa)). The N-myristoyl glycine moiety is linked to residue glycine 2. 2 stretches are compositionally biased toward pro residues: residues 29–38 (DPPPQQPPPQ) and 55–72 (SLPP…PPPS). The tract at residues 164 to 283 (FVFDALFDGS…GSFKVKVMKQ (120 aa)) is DAR2 domain. An RING-type; atypical zinc finger spans residues 321–360 (CVICLTEPKDTAVMPCRHLCLCSDCAEELRFQTNKCPICR).

This sequence belongs to the RING-type zinc finger family. LOG2 subfamily. Post-translationally, myristoylated (in vitro).

It carries out the reaction S-ubiquitinyl-[E2 ubiquitin-conjugating enzyme]-L-cysteine + [acceptor protein]-L-lysine = [E2 ubiquitin-conjugating enzyme]-L-cysteine + N(6)-ubiquitinyl-[acceptor protein]-L-lysine.. It functions in the pathway protein modification; protein ubiquitination. Functionally, acts as an E3 ubiquitin-protein ligase, or as part of E3 complex, which accepts ubiquitin from specific E2 ubiquitin-conjugating enzymes and then transfers it to substrates (in vitro). In Arabidopsis thaliana (Mouse-ear cress), this protein is Probable E3 ubiquitin-protein ligase LUL3 (LUL3).